An 88-amino-acid polypeptide reads, in one-letter code: MVKLRLKRCGRKQRAVYRIVAIDGRSRREGRDLRKVGFYDPINNQTHLNVPAILYFLAKGAQPTGTVHDISQKAGVFTEVSLNQTKFY.

This sequence belongs to the bacterial ribosomal protein bS16 family.

It is found in the plastid. The protein resides in the chloroplast. The chain is Small ribosomal subunit protein bS16c from Citrus sinensis (Sweet orange).